The sequence spans 132 residues: Small ribosomal subunit protein uS8c (132 aa).

This sequence belongs to the universal ribosomal protein uS8 family. As to quaternary structure, part of the 30S ribosomal subunit.

The protein resides in the plastid. The protein localises to the chloroplast. In terms of biological role, one of the primary rRNA binding proteins, it binds directly to 16S rRNA central domain where it helps coordinate assembly of the platform of the 30S subunit. The sequence is that of Small ribosomal subunit protein uS8c (rps8) from Dioscorea elephantipes (Elephant's foot yam).